A 463-amino-acid polypeptide reads, in one-letter code: Ribosomal protein uS12 methylthiotransferase RimO (463 aa).

Residues 15-130 (PKVGMVSLGC…VMQAVHSHLP (116 aa)) enclose the MTTase N-terminal domain. Cys24, Cys60, Cys89, Cys161, Cys165, and Cys168 together coordinate [4Fe-4S] cluster. The Radical SAM core domain occupies 147-392 (LTPRHYAYLK…MEVAEEVSAA (246 aa)). The TRAM domain maps to 395-463 (ARKIGKTLKV…ADGHDLWGEV (69 aa)).

It belongs to the methylthiotransferase family. RimO subfamily. [4Fe-4S] cluster is required as a cofactor.

The protein resides in the cytoplasm. It carries out the reaction L-aspartate(89)-[ribosomal protein uS12]-hydrogen + (sulfur carrier)-SH + AH2 + 2 S-adenosyl-L-methionine = 3-methylsulfanyl-L-aspartate(89)-[ribosomal protein uS12]-hydrogen + (sulfur carrier)-H + 5'-deoxyadenosine + L-methionine + A + S-adenosyl-L-homocysteine + 2 H(+). Its function is as follows. Catalyzes the methylthiolation of an aspartic acid residue of ribosomal protein uS12. The protein is Ribosomal protein uS12 methylthiotransferase RimO of Burkholderia mallei (strain NCTC 10229).